The primary structure comprises 386 residues: MFGSSREIRPYLARQMLKTTLYGSWLLGIFPFTLDSGKRIRQLRRSRCLTLYGLVLNYFLIFTLIRLAFEYRKHKLEAFKRNPVLEMINVVIGIINVLSALIVHFMNFWGSRKVGEICNELLILEYQDFEGLNGRNCPNFNCFVIQKCLTILGQLLSFFTLNFALPGLEFHICLVLLSCLMEFSLNLNIMHYHVGVLLIYRYVWLINEQLKDLVSQLKLNPETDFSRIHQFLSLYKRLLELNRKLVIAYEYQMTLFIIAQLSGNIVVIYFLIVYGLSMRTYSIFLVAFPNSLLINIWDFWLCIAACDLTEKAGDETAIILKIFSDLEHRDDKLEMSVNEFAWLCSHRKFRFQLCGLFSMNCRMGFKMIITTFLYLVYLVQFDYMNL.

The Cytoplasmic segment spans residues 1–48 (MFGSSREIRPYLARQMLKTTLYGSWLLGIFPFTLDSGKRIRQLRRSRC). Residues 49 to 69 (LTLYGLVLNYFLIFTLIRLAF) form a helical membrane-spanning segment. At 70-89 (EYRKHKLEAFKRNPVLEMIN) the chain is on the extracellular side. Residues 90 to 110 (VVIGIINVLSALIVHFMNFWG) traverse the membrane as a helical segment. Over 111-155 (SRKVGEICNELLILEYQDFEGLNGRNCPNFNCFVIQKCLTILGQL) the chain is Cytoplasmic. A helical transmembrane segment spans residues 156–176 (LSFFTLNFALPGLEFHICLVL). The Extracellular portion of the chain corresponds to 177 to 178 (LS). A helical membrane pass occupies residues 179 to 199 (CLMEFSLNLNIMHYHVGVLLI). Residues 200–254 (YRYVWLINEQLKDLVSQLKLNPETDFSRIHQFLSLYKRLLELNRKLVIAYEYQMT) are Cytoplasmic-facing. A helical transmembrane segment spans residues 255-275 (LFIIAQLSGNIVVIYFLIVYG). Over 276–282 (LSMRTYS) the chain is Extracellular. A helical transmembrane segment spans residues 283–303 (IFLVAFPNSLLINIWDFWLCI). Residues 304–363 (AACDLTEKAGDETAIILKIFSDLEHRDDKLEMSVNEFAWLCSHRKFRFQLCGLFSMNCRM) lie on the Cytoplasmic side of the membrane. Residues 364 to 384 (GFKMIITTFLYLVYLVQFDYM) form a helical membrane-spanning segment. At 385–386 (NL) the chain is on the extracellular side.

Belongs to the insect chemoreceptor superfamily. Gustatory receptor (GR) family. Gr22e subfamily. In terms of tissue distribution, expressed in taste bristles in the foreleg and labial palps. In larvae, is expressed in neurons of the dorsal and posterior pharyngeal sense organs. Expressed in taste neurons that mediate sensitivity to bitter compounds.

The protein localises to the cell membrane. In terms of biological role, probable gustatory receptor which mediates acceptance or avoidance behavior, depending on its substrates. Seems to be involved in the sensing of bitter taste since it is expressed in neurons that mediate sensitivity to bitter compounds. The polypeptide is Putative gustatory receptor 22b (Drosophila melanogaster (Fruit fly)).